Here is a 602-residue protein sequence, read N- to C-terminus: Myotubularin (602 aa).

Positions 1-40 (MASSSASDCDAHPVERESMRKVSQDGVRQDMSKSGPRLPG) are disordered. Basic and acidic residues predominate over residues 9–31 (CDAHPVERESMRKVSQDGVRQDM). At Ser18 the chain carries Phosphoserine. Residues 28–97 (RQDMSKSGPR…GVISRIEKMG (70 aa)) enclose the GRAM domain. The 376-residue stretch at 163-538 (GWAIYNPVEE…RHLELWVNYY (376 aa)) folds into the Myotubularin phosphatase domain. The a 1,2-diacyl-sn-glycero-3-phospho-(1D-myo-inositol-3,5-bisphosphate) site is built by Asn288, Asn313, and Ile314. Asn288, Asn313, and Ile314 together coordinate a 1,2-diacyl-sn-glycero-3-phospho-(1D-myo-inositol-3-phosphate). Catalysis depends on Cys375, which acts as the Phosphocysteine intermediate. 8 residues coordinate a 1,2-diacyl-sn-glycero-3-phospho-(1D-myo-inositol-3,5-bisphosphate): Ser376, Asp377, Gly378, Trp379, Asp380, Arg381, Lys417, and Arg421. A 1,2-diacyl-sn-glycero-3-phospho-(1D-myo-inositol-3-phosphate) is bound by residues Ser376, Asp377, Gly378, Trp379, Asp380, and Arg381. Arg421 contributes to the a 1,2-diacyl-sn-glycero-3-phospho-(1D-myo-inositol-3-phosphate) binding site. The residue at position 495 (Thr495) is a Phosphothreonine. The segment covering 578-592 (PTKLTDSSTPPSGSA) has biased composition (polar residues). Residues 578 to 602 (PTKLTDSSTPPSGSAQIAPRMQTHF) are disordered.

It belongs to the protein-tyrosine phosphatase family. Non-receptor class myotubularin subfamily. As to quaternary structure, heterodimer with MTMR12. Interacts with KMT2A/MLL1 (via SET domain). Interacts with DES in skeletal muscle but not in cardiac muscle. Interacts with SPEG.

The protein localises to the cytoplasm. It is found in the cell membrane. The protein resides in the cell projection. Its subcellular location is the filopodium. It localises to the ruffle. The protein localises to the late endosome. It is found in the myofibril. The protein resides in the sarcomere. The enzyme catalyses a 1,2-diacyl-sn-glycero-3-phospho-(1D-myo-inositol-3-phosphate) + H2O = a 1,2-diacyl-sn-glycero-3-phospho-(1D-myo-inositol) + phosphate. The catalysed reaction is a 1,2-diacyl-sn-glycero-3-phospho-(1D-myo-inositol-3,5-bisphosphate) + H2O = a 1,2-diacyl-sn-glycero-3-phospho-(1D-myo-inositol-5-phosphate) + phosphate. It carries out the reaction 1,2-dioctanoyl-sn-glycero-3-phospho-(1-D-myo-inositol-3-phosphate) + H2O = 1,2-dioctanoyl-sn-glycero-3-phospho-(1D-myo-inositol) + phosphate. It catalyses the reaction 1,2-dioctanoyl-sn-glycero-3-phospho-(1D-myo-inositol-3,5-bisphosphate) + H2O = 1,2-dioctanoyl-sn-glycero-3-phospho-(1D-myo-inositol-5-phosphate) + phosphate. The enzyme catalyses 1,2-dihexadecanoyl-sn-glycero-3-phospho-(1D-myo-inositol-3,5-phosphate) + H2O = 1,2-dihexadecanoyl-sn-glycero-3-phospho-(1D-myo-inositol-5-phosphate) + phosphate. Its activity is regulated as follows. Allosterically activated by phosphatidylinositol 5-phosphate (PI5P). In terms of biological role, lipid phosphatase which dephosphorylates phosphatidylinositol 3-monophosphate (PI3P) and phosphatidylinositol 3,5-bisphosphate (PI(3,5)P2). Has also been shown to dephosphorylate phosphotyrosine- and phosphoserine-containing peptides. Negatively regulates EGFR degradation through regulation of EGFR trafficking from the late endosome to the lysosome. Plays a role in vacuolar formation and morphology. Regulates desmin intermediate filament assembly and architecture. Plays a role in mitochondrial morphology and positioning. Required for skeletal muscle maintenance but not for myogenesis. In skeletal muscles, stabilizes MTMR12 protein levels. The sequence is that of Myotubularin from Rattus norvegicus (Rat).